A 1209-amino-acid polypeptide reads, in one-letter code: MFLMNASPVVALQSKWEAFGPPGSCRFPRCFSEADEGVESASVSARVQMLISTLQRDGAARGTSDERAAQRGHRAEGCHDARPAAKPTVHKEPPALAVCGLVADFDPMGEEETTDFGPLVLDSDSDDSVDRDIEEAIQEYLKAKSGAAQPGAGGAQPGAAQPSRAAGGGSRCKPEPAHGSAPTALCPPKLVPGSGGGPGSQVGSSKDQGSASPVSVSSDDSFEQSIRAEIEQFLNEKRQHETQKCDGSVEKKPDTNENSAKSLLKSHQEPPTKVVHRQGLLGVQKEFAFRKPPRLAKMNVQPRSLRSKVTTTQENEGSTKPATPCRPSEAAQNKGGIKRSASAARRGKRVMSAAQASEASDSSSDDGIEEAIQLYQLQKTRKEADGDLPQRVQLREERAPDPPAHSTSSATKSALPETHRKTPSKKKLVATKTMDPGPGGLDTDHAPKLLKETKAPPPASPASRSEFVERSSCRADTSAELMCAEAILDISKTILPAPVEGSDGSLSASPLFYSPNVPSRSDGDSSSVDSDDSIEQEIRTFLALKAQSGSLLARGESCPQAAQGPLLPPGLNSQTGGHKTPLSKTPDPLLGCKRKRRGGGHVRPSTPKKMQEVVKDGSQDADHSQGRAEPGHERRDLPIQGKASEALGGEGTARGPGDTRMSQGQGKTDEARRLDEKESSEDKSSSLDSDEDLDTAIKDLLRSKRKLKKRCREPRAACRKKVRFSTAQTHFLEQLGGLRRDWKDRGPPVLKSCLSKSKRDSGEGPGKKPPSVFGSTAERMRQEGAASQDAALAFRVRRPASASASEGNPFPRESQGPAPSPGSLSDDSSSVDSNDSIELEIRKFLAEKAKESVSSSEVQAEGPTALGTGGPARPEVLCRKEPAPPPGVCTRSQRARGVPHLAEGLRGTESAGAQGTAGLFSQGGKGLPAAPARGDPVPPRSTSGGVSAKGLSVSRRNVYVHKDQSPRGAEPAAKSAFGQLPSCATAGTEAGGARGTFHMGCGSPSFLTPSPGAERDAGAQADRTPPWSDFAHQSRLPSPWVLRSEGRDAVWRGGVGSERDKGSEGPARGLPSLPLAGFSPLLSTQLFHFGKGVSWGGRQAGLFSPHLGLPLQGPSFSAFREAQAGPSPVFGSPHLLAKKDGGPWPTRKAQAGLSLHDRRSSGSEESILDLRYRRRVNRDDQEQDALGSDASDFSDTSTEDSGGSSVVKV.

Disordered regions lie at residues 57-91 (DGAA…TVHK), 145-279 (SGAA…HRQG), 291-471 (KPPR…VERS), 501-532 (GSDG…DSDD), 555-694 (GESC…EDLD), 733-836 (EQLG…SNDS), 848-1033 (KAKE…FAHQ), 1052-1072 (RGGV…GLPS), and 1118-1209 (AFRE…VVKV). The segment covering 63–91 (TSDERAAQRGHRAEGCHDARPAAKPTVHK) has biased composition (basic and acidic residues). A compositionally biased stretch (low complexity) spans 201–219 (QVGSSKDQGSASPVSVSSD). Over residues 226–255 (IRAEIEQFLNEKRQHETQKCDGSVEKKPDT) the composition is skewed to basic and acidic residues. The segment covering 301-321 (QPRSLRSKVTTTQENEGSTKP) has biased composition (polar residues). A compositionally biased stretch (low complexity) spans 352–362 (SAAQASEASDS). Residues 442-454 (DTDHAPKLLKETK) are compositionally biased toward basic and acidic residues. Basic and acidic residues-rich tracts occupy residues 609-637 (KMQE…RRDL), 667-685 (KTDE…DKSS), and 757-766 (SKRDSGEGPG). Low complexity-rich tracts occupy residues 821–836 (PGSL…SNDS) and 852–861 (SVSSSEVQAE). The residue at position 1161 (Ser1161) is a Phosphoserine. The segment covering 1187–1209 (GSDASDFSDTSTEDSGGSSVVKV) has biased composition (low complexity).

In terms of assembly, interacts with UTP20 and PPP1CA. Ubiquitous in normal tissues. Expressed in numerous adenocarcinoma cell lines.

The protein resides in the nucleus. It localises to the nucleolus. In terms of biological role, inhibits phosphatase activity of protein phosphatase 1 (PP1) complexes. May positively regulate cell proliferation. This Homo sapiens (Human) protein is Protein phosphatase 1 regulatory subunit 26 (PPP1R26).